A 199-amino-acid chain; its full sequence is 5'-deoxynucleotidase YfbR (199 aa).

Residues 18–19 (RW) and His33 contribute to the substrate site. One can recognise an HD domain in the interval 30–142 (VSEHSLQVAM…VKQADALCAY (113 aa)). A divalent metal cation is bound by residues His33, His68, and Asp69. Substrate is bound by residues Asp69, 77 to 80 (DLPT), and Asp137. Asp137 is an a divalent metal cation binding site.

The protein belongs to the 5DNU family. Homodimer. A divalent metal cation serves as cofactor.

It localises to the cytoplasm. The catalysed reaction is a 2'-deoxyribonucleoside 5'-phosphate + H2O = a 2'-deoxyribonucleoside + phosphate. Catalyzes the strictly specific dephosphorylation of 2'-deoxyribonucleoside 5'-monophosphates. This is 5'-deoxynucleotidase YfbR from Shigella flexneri serotype 5b (strain 8401).